Reading from the N-terminus, the 613-residue chain is Pescadillo homolog (613 aa).

A coiled-coil region spans residues K259–X344. Residues K268–N333 are disordered. Residues E278–N333 show a composition bias toward basic and acidic residues. The 104-residue stretch at S350 to I453 folds into the BRCT domain. The interval L485–S517 is disordered. A coiled-coil region spans residues N492 to K601. A compositionally biased stretch (low complexity) spans K497–D511.

Belongs to the pescadillo family.

The protein resides in the nucleus. Its subcellular location is the nucleolus. It localises to the nucleoplasm. Its function is as follows. Required for maturation of ribosomal RNAs and formation of the large ribosomal subunit. This chain is Pescadillo homolog, found in Plasmodium yoelii yoelii.